A 1787-amino-acid polypeptide reads, in one-letter code: Chromodomain-helicase-DNA-binding protein 3 homolog (1787 aa).

Disordered regions lie at residues 1–80 (MSDD…PDPY) and 170–258 (PVTP…KEQG). Residues 10-43 (DGDETMEEDSMLAEGHEDGEEDVGEDEEEVETEE) are compositionally biased toward acidic residues. Residues 56-71 (PPPKKKKGGKKSSKKK) are compositionally biased toward basic residues. Positions 192–243 (DGSDGEGGGHDSDQEFEALIKQHEKQQDEAEKGKEEARINRAAAKVDKRKAA) are enriched in basic and acidic residues. 2 consecutive PHD-type zinc fingers follow at residues 265 to 312 (QENC…CEEH) and 328 to 375 (MDYC…CIIP). 2 consecutive Chromo domains span residues 373–476 (IIPE…STLS) and 501–583 (MQIH…GPKE). A Helicase ATP-binding domain is found at 628 to 812 (RHCWSNGTDA…FHLLNFLAPD (185 aa)). 641 to 648 (DEMGLGKT) lines the ATP pocket. Residues 763-766 (DEAH) carry the DEAH box motif. The 164-residue stretch at 944 to 1107 (LLQKMLRKLK…GKSMSKTELD (164 aa)) folds into the Helicase C-terminal domain. Disordered regions lie at residues 1120 to 1141 (EEEAPVEGADGEGTSSKKPNEQ), 1186 to 1212 (TKEADDADDDEDETEVIKEGTEEQDPN), 1248 to 1295 (ENMG…EERS), and 1754 to 1787 (RASSIAATKDEPMDTSDKDIPSTSAAAGSSYPRY). The span at 1190–1199 (DDADDDEDET) shows a compositional bias: acidic residues. Over residues 1248-1261 (ENMGQDWSAQNNQQ) the composition is skewed to polar residues. The span at 1761–1773 (TKDEPMDTSDKDI) shows a compositional bias: basic and acidic residues.

This sequence belongs to the SNF2/RAD54 helicase family. In terms of tissue distribution, expressed in the head and vulva.

It localises to the nucleus. The catalysed reaction is ATP + H2O = ADP + phosphate + H(+). Functionally, ATP-dependent chromatin-remodeling factor that has a role in notch signaling-dependent vulval cell fate determination. May also have a role in pharyngeal precursor cell specification. In Caenorhabditis elegans, this protein is Chromodomain-helicase-DNA-binding protein 3 homolog (chd-3).